Reading from the N-terminus, the 450-residue chain is L-lysine-epsilon aminotransferase (450 aa).

Glycine 127 and alanine 128 together coordinate pyridoxal 5'-phosphate. 2-oxoglutarate contacts are provided by arginine 168 and glutamine 274. Arginine 168 serves as a coordination point for L-lysine. Glutamine 274 contributes to the pyridoxal 5'-phosphate binding site. Lysine 300 carries the N6-(pyridoxal phosphate)lysine modification. Arginine 423 is a 2-oxoglutarate binding site.

It belongs to the class-III pyridoxal-phosphate-dependent aminotransferase family. Pyridoxal 5'-phosphate serves as cofactor.

The enzyme catalyses L-lysine + 2-oxoglutarate = (S)-2-amino-6-oxohexanoate + L-glutamate. It functions in the pathway antibiotic biosynthesis; cephamycin C biosynthesis. Catalyzes the transfer of the terminal amino group of L-lysine to alpha-ketoglutarate to yield L-glutamate and 2-aminoadipate 6-semialdehyde ((S)-2-amino-6-oxohexanoate), which is spontaneously converted to the dehydrated form 1-piperideine 6-carboxylate. The polypeptide is L-lysine-epsilon aminotransferase (Amycolatopsis lactamdurans (Nocardia lactamdurans)).